Here is a 561-residue protein sequence, read N- to C-terminus: DNA ligase B (561 aa).

The active-site N6-AMP-lysine intermediate is the K124.

It belongs to the NAD-dependent DNA ligase family. LigB subfamily.

The catalysed reaction is NAD(+) + (deoxyribonucleotide)n-3'-hydroxyl + 5'-phospho-(deoxyribonucleotide)m = (deoxyribonucleotide)n+m + AMP + beta-nicotinamide D-nucleotide.. Catalyzes the formation of phosphodiester linkages between 5'-phosphoryl and 3'-hydroxyl groups in double-stranded DNA using NAD as a coenzyme and as the energy source for the reaction. The polypeptide is DNA ligase B (Cronobacter sakazakii (strain ATCC BAA-894) (Enterobacter sakazakii)).